The following is an 85-amino-acid chain: Small ribosomal subunit protein uS15 (85 aa).

This sequence belongs to the universal ribosomal protein uS15 family. As to quaternary structure, part of the 30S ribosomal subunit. Forms a bridge to the 50S subunit in the 70S ribosome, contacting the 23S rRNA.

Functionally, one of the primary rRNA binding proteins, it binds directly to 16S rRNA where it helps nucleate assembly of the platform of the 30S subunit by binding and bridging several RNA helices of the 16S rRNA. Forms an intersubunit bridge (bridge B4) with the 23S rRNA of the 50S subunit in the ribosome. This chain is Small ribosomal subunit protein uS15, found in Fusobacterium nucleatum subsp. nucleatum (strain ATCC 25586 / DSM 15643 / BCRC 10681 / CIP 101130 / JCM 8532 / KCTC 2640 / LMG 13131 / VPI 4355).